The sequence spans 407 residues: Multifunctional CCA protein (407 aa).

ATP-binding residues include glycine 8 and arginine 11. Residues glycine 8 and arginine 11 each contribute to the CTP site. Mg(2+) is bound by residues aspartate 21 and aspartate 23. ATP contacts are provided by arginine 91, arginine 137, and arginine 140. Residues arginine 91, arginine 137, and arginine 140 each coordinate CTP. An HD domain is found at 228–329 (TGIHTLLVAE…VKIFNKLDVW (102 aa)).

This sequence belongs to the tRNA nucleotidyltransferase/poly(A) polymerase family. Bacterial CCA-adding enzyme type 1 subfamily. Monomer. Can also form homodimers and oligomers. Requires Mg(2+) as cofactor. Ni(2+) is required as a cofactor.

It carries out the reaction a tRNA precursor + 2 CTP + ATP = a tRNA with a 3' CCA end + 3 diphosphate. The enzyme catalyses a tRNA with a 3' CCA end + 2 CTP + ATP = a tRNA with a 3' CCACCA end + 3 diphosphate. Catalyzes the addition and repair of the essential 3'-terminal CCA sequence in tRNAs without using a nucleic acid template. Adds these three nucleotides in the order of C, C, and A to the tRNA nucleotide-73, using CTP and ATP as substrates and producing inorganic pyrophosphate. tRNA 3'-terminal CCA addition is required both for tRNA processing and repair. Also involved in tRNA surveillance by mediating tandem CCA addition to generate a CCACCA at the 3' terminus of unstable tRNAs. While stable tRNAs receive only 3'-terminal CCA, unstable tRNAs are marked with CCACCA and rapidly degraded. This chain is Multifunctional CCA protein, found in Vibrio vulnificus (strain CMCP6).